Consider the following 396-residue polypeptide: Na(+)/H(+) antiporter NhaA 2 (396 aa).

Transmembrane regions (helical) follow at residues 17-37 (LSGL…NSDF), 62-82 (LLHW…GLEI), 98-118 (SFPI…YISL), 125-145 (GFGV…MLLG), 154-174 (LFLV…VAIF), 179-199 (LHFE…FLNY), 209-229 (IILG…STIA), 268-288 (FSAF…IIDF), 296-316 (LIVL…IFSF), 337-357 (IFAV…ISHL), and 368-388 (VKLG…VLLI).

This sequence belongs to the NhaA Na(+)/H(+) (TC 2.A.33) antiporter family.

The protein localises to the cell inner membrane. It catalyses the reaction Na(+)(in) + 2 H(+)(out) = Na(+)(out) + 2 H(+)(in). Na(+)/H(+) antiporter that extrudes sodium in exchange for external protons. In Aliarcobacter butzleri (strain RM4018) (Arcobacter butzleri), this protein is Na(+)/H(+) antiporter NhaA 2.